A 238-amino-acid polypeptide reads, in one-letter code: Pyridoxine 5'-phosphate synthase (238 aa).

Asparagine 6 lines the 3-amino-2-oxopropyl phosphate pocket. 8–9 (DH) lines the 1-deoxy-D-xylulose 5-phosphate pocket. Arginine 17 serves as a coordination point for 3-amino-2-oxopropyl phosphate. Histidine 42 (proton acceptor) is an active-site residue. 1-deoxy-D-xylulose 5-phosphate contacts are provided by arginine 44 and histidine 49. Glutamate 69 serves as the catalytic Proton acceptor. Threonine 99 provides a ligand contact to 1-deoxy-D-xylulose 5-phosphate. Histidine 186 serves as the catalytic Proton donor. 3-amino-2-oxopropyl phosphate-binding positions include glycine 187 and 208-209 (GH).

This sequence belongs to the PNP synthase family. In terms of assembly, homooctamer; tetramer of dimers.

The protein resides in the cytoplasm. It carries out the reaction 3-amino-2-oxopropyl phosphate + 1-deoxy-D-xylulose 5-phosphate = pyridoxine 5'-phosphate + phosphate + 2 H2O + H(+). It functions in the pathway cofactor biosynthesis; pyridoxine 5'-phosphate biosynthesis; pyridoxine 5'-phosphate from D-erythrose 4-phosphate: step 5/5. Catalyzes the complicated ring closure reaction between the two acyclic compounds 1-deoxy-D-xylulose-5-phosphate (DXP) and 3-amino-2-oxopropyl phosphate (1-amino-acetone-3-phosphate or AAP) to form pyridoxine 5'-phosphate (PNP) and inorganic phosphate. This is Pyridoxine 5'-phosphate synthase from Anaplasma marginale (strain St. Maries).